The chain runs to 504 residues: 5-epiaristolochene 1,3-dihydroxylase (504 aa).

A helical transmembrane segment spans residues 2–22; it reads QFFSLVSIFLFLSFLFLLRKW. Cysteine 442 lines the heme pocket.

Belongs to the cytochrome P450 family. The cofactor is heme.

Its subcellular location is the membrane. It catalyses the reaction (+)-5-epi-aristolochene + 2 reduced [NADPH--hemoprotein reductase] + 2 O2 = capsidiol + 2 oxidized [NADPH--hemoprotein reductase] + 2 H2O + 2 H(+). Its activity is regulated as follows. Inhibited by ancymidol and ketoconazole. Its function is as follows. Involved in the biosynthesis of capsidiol. Catalyzes the successive and independent hydroxylations at the C1 and C3 positions of 5-epiaristolochene. The second hydroxylation step is 8-fold more efficient than the first hydroxylation reaction. Capable of utilizing premnaspirodiene as a substrate. The polypeptide is 5-epiaristolochene 1,3-dihydroxylase (CYP71D20) (Nicotiana tabacum (Common tobacco)).